A 294-amino-acid polypeptide reads, in one-letter code: NAD kinase (294 aa).

The active-site Proton acceptor is Asp72. NAD(+)-binding positions include Asp72 to Gly73, Asn146 to Asp147, Arg157, Arg174, Asp176, Thr187 to Ser192, and Gln247.

This sequence belongs to the NAD kinase family. A divalent metal cation serves as cofactor.

Its subcellular location is the cytoplasm. It catalyses the reaction NAD(+) + ATP = ADP + NADP(+) + H(+). Functionally, involved in the regulation of the intracellular balance of NAD and NADP, and is a key enzyme in the biosynthesis of NADP. Catalyzes specifically the phosphorylation on 2'-hydroxyl of the adenosine moiety of NAD to yield NADP. The chain is NAD kinase from Marinobacter nauticus (strain ATCC 700491 / DSM 11845 / VT8) (Marinobacter aquaeolei).